Reading from the N-terminus, the 225-residue chain is Ribonuclease 3 (225 aa).

In terms of domain architecture, RNase III spans 5–127 (LERLQRQIGY…IIGAISLDSD (123 aa)). E40 contributes to the Mg(2+) binding site. Residue D44 is part of the active site. Mg(2+) contacts are provided by D113 and E116. The active site involves E116. The region spanning 154-224 (DPKTRLQEYL…AEKILQLLEM (71 aa)) is the DRBM domain.

Belongs to the ribonuclease III family. As to quaternary structure, homodimer. It depends on Mg(2+) as a cofactor.

The protein localises to the cytoplasm. It carries out the reaction Endonucleolytic cleavage to 5'-phosphomonoester.. Digests double-stranded RNA. Involved in the processing of primary rRNA transcript to yield the immediate precursors to the large and small rRNAs (23S and 16S). Also processes some mRNAs, and tRNAs when they are encoded in the rRNA operon. Its function is as follows. CRISPR (clustered regularly interspaced short palindromic repeat) is an adaptive immune system that provides protection against mobile genetic elements (viruses, transposable elements and conjugative plasmids). CRISPR clusters contain spacers, sequences complementary to antecedent mobile elements, and target invading nucleic acids. CRISPR clusters are transcribed and processed into CRISPR RNA (crRNA). In this organism endogenous ribonuclease 3 and Cas9 are required for correct coprocessing of pre-crRNA and the trans-encoded small RNA (tracrRNA). Cas9, crRNA and tracrRNA are required for cleavage of invading DNA. Complements pre-crRNA and tracrRNA coprocessing defects in an rnc deletion in S.pyogenes strain 370. In Pasteurella multocida (strain Pm70), this protein is Ribonuclease 3.